Reading from the N-terminus, the 421-residue chain is Solute carrier family 35 member F3 (421 aa).

Residues 25-45 form a disordered region; that stretch reads EGEERPRDSPGPAEAQAPAGV. Transmembrane regions (helical) follow at residues 66 to 86, 98 to 118, 149 to 169, 179 to 199, 208 to 228, 232 to 252, 266 to 286, 305 to 325, 326 to 346, and 352 to 372; these read IFWG…STQL, FTLT…YYVG, VFFT…YLYL, DVSV…WIVL, IVAA…DGFH, VIGI…KVLF, LFLS…PIIL, LCGF…GIAV, TYPT…AVID, and IVFN…FLLL. Residues 393 to 421 are disordered; it reads KKEEPAEGAADLSSGPQSKNRRARPSFAR. Basic residues predominate over residues 411–421; sequence KNRRARPSFAR.

Belongs to the SLC35F solute transporter family. Expressed at the highest levels in the adult cerebellum.

It localises to the membrane. It carries out the reaction thiamine(in) = thiamine(out). Functionally, mediates thiamine transport. The chain is Solute carrier family 35 member F3 from Homo sapiens (Human).